A 291-amino-acid chain; its full sequence is N-acetylmannosamine kinase (291 aa).

Residues 5 to 12 (AIDIGGTK) and 132 to 139 (GVGGGVVS) each bind ATP. His-156, Cys-166, Cys-168, and Cys-173 together coordinate Zn(2+).

This sequence belongs to the ROK (NagC/XylR) family. NanK subfamily. Homodimer.

The enzyme catalyses an N-acyl-D-mannosamine + ATP = an N-acyl-D-mannosamine 6-phosphate + ADP + H(+). The protein operates within amino-sugar metabolism; N-acetylneuraminate degradation; D-fructose 6-phosphate from N-acetylneuraminate: step 2/5. Catalyzes the phosphorylation of N-acetylmannosamine (ManNAc) to ManNAc-6-P. The sequence is that of N-acetylmannosamine kinase from Escherichia coli O7:K1 (strain IAI39 / ExPEC).